Here is a 333-residue protein sequence, read N- to C-terminus: Glycogenin-1 (333 aa).

N-acetylthreonine is present on T2. The UDP site is built by L9, T11, N12, and Y15. UDP-alpha-D-glucose-binding residues include L9, T11, N12, and Y15. S44 bears the Phosphoserine mark. Position 77 (R77) interacts with UDP. The UDP-alpha-D-glucose site is built by R77, K86, D102, A103, D104, N133, S134, D160, D163, and Q164. UDP contacts are provided by D102, A103, and D104. Position 102 (D102) interacts with Mn(2+). D104 is a Mn(2+) binding site. O-linked (Glc...) tyrosine glycosylation occurs at Y195. UDP contacts are provided by H212, G215, and K218. H212 is a Mn(2+) binding site. UDP-alpha-D-glucose contacts are provided by G215 and K218. Residues 284–316 (SDLSFGEAPAAPQPSMSSEERKERWEQGQADYM) form an interaction with GYS1 region. The tract at residues 290–316 (EAPAAPQPSMSSEERKERWEQGQADYM) is disordered.

The protein belongs to the glycosyltransferase 8 family. Glycogenin subfamily. As to quaternary structure, part of the GYS1-GYG1 complex, a heterooctamer composed of a tetramer of GYS1 and 2 dimers of GYG1, where each GYS1 protomer binds to one GYG1 subunit (via GYG1 C-terminus); the GYS1 tetramer may dissociate from GYG1 dimers to continue glycogen polymerization on its own. May also form a heterooctamer complex with GYS2. Requires Mn(2+) as cofactor. Post-translationally, self-glycosylated by the transfer of glucose residues from UDP-glucose to itself, forming an alpha-1,4-glycan of around 10 residues attached to Tyr-195. In terms of processing, phosphorylated. Skeletal muscle, heart, to a lesser extent in kidney, lung and brain.

The protein resides in the cytoplasm. Its subcellular location is the nucleus. The catalysed reaction is L-tyrosyl-[glycogenin] + UDP-alpha-D-glucose = alpha-D-glucosyl-L-tyrosyl-[glycogenin] + UDP + H(+). It catalyses the reaction [1,4-alpha-D-glucosyl](n)-L-tyrosyl-[glycogenin] + UDP-alpha-D-glucose = [1,4-alpha-D-glucosyl](n+1)-L-tyrosyl-[glycogenin] + UDP + H(+). It participates in glycan biosynthesis; glycogen biosynthesis. In terms of biological role, glycogenin participates in the glycogen biosynthetic process along with glycogen synthase and glycogen branching enzyme. It catalyzes the formation of a short alpha (1,4)-glucosyl chain covalently attached via a glucose 1-O-tyrosyl linkage to internal tyrosine residues and these chains act as primers for the elongation reaction catalyzed by glycogen synthase. This Mus musculus (Mouse) protein is Glycogenin-1.